We begin with the raw amino-acid sequence, 55 residues long: Accessory gland-specific peptide 70A (55 aa).

The N-terminal stretch at 1 to 19 (MKTLSVFLVLVCLLGLVQS) is a signal peptide. Pro28, Pro32, Pro34, and Pro38 each carry hydroxyproline. Cys43 and Cys55 are joined by a disulfide.

Main cells of the accessory glands of males (paragonial gland).

Its subcellular location is the secreted. Functionally, represses female sexual receptivity and stimulates oviposition. The protein is Accessory gland-specific peptide 70A (Acp70A) of Drosophila sechellia (Fruit fly).